The primary structure comprises 2443 residues: Non-reducing polyketide synthase olcA (2443 aa).

In terms of domain architecture, Ketosynthase family 3 (KS3) spans 5–442; it reads IEPIAIVGTG…GANVHAILES (438 aa). Catalysis depends on for beta-ketoacyl synthase activity residues Cys178, His317, and His362. Positions 550 to 885 are malonyl-CoA:ACP transacylase (MAT) domain; the sequence is GVFTGQGAQW…AAIGSLWTYL (336 aa). Residue Ser645 is the For acyl/malonyl transferase activity of the active site. The tract at residues 940-1070 is N-terminal hotdog fold; sequence NCLLGVLSPD…GVLTMTLGSA (131 aa). Positions 940 to 1231 constitute a PKS/mFAS DH domain; the sequence is NCLLGVLSPD…LVPLLEDLAD (292 aa). The interval 989-1497 is product template (PT) domain; sequence ALESAKLIAG…SLPVTISNMR (509 aa). A C-terminal hotdog fold region spans residues 1085–1231; that stretch reads MRAVDIEDFY…LVPLLEDLAD (147 aa). Residues 1771 to 2159 form a methyltransferase (CMeT) domain region; the sequence is NKRYLAHTHV…LERFTCALPP (389 aa). One can recognise a Carrier domain in the interval 2359–2434; it reads EILTSHLLTQ…EITSSAAAKL (76 aa). Position 2394 is an O-(pantetheine 4'-phosphoryl)serine (Ser2394).

It carries out the reaction nicotinyl-CoA + 2 malonyl-CoA + H(+) = 4-hydroxy-6-(pyridin-3-yl)-2H-pyran-2-one + 2 CO2 + 3 CoA. It functions in the pathway secondary metabolite biosynthesis; terpenoid biosynthesis. In terms of biological role, non-reducing polyketide synthase; part of the gene cluster that mediates the biosynthesis of 15-deoxyoxalicine B. The first step of the pathway is the synthesis of nicotinyl-CoA from nicotinic acid by the nicotinic acid-CoA ligase olcI. Nicotinyl-CoA is then a substrate of polyketide synthase olcA to produce 4-hydroxy-6-(3-pyridinyl)-2H-pyran-2-one (HPPO) which is further prenylated by the polyprenyl transferase olcH to yield geranylgeranyl-HPPO. Geranylgeranyl pyrophosphate is provided by the cluster-specific geranylgeranyl pyrophosphate synthase olcC. The FAD-dependent monooxygenase olcE catalyzes the epoxidation of geranylgeranyl-HPPO and the terpene cyclase olcD catalyzes the cyclization of the terpenoid component, resulting in the formation of the tricyclic terpene moiety seen in predecaturin E. The cytochrome P450 monooxygenase then catalyzes the allylic oxidation of predecaturin E, which is followed by spirocylization with concomitant loss of one molecule of water to form decaturin E. Decaturin E is the substrate of the cytochrome P450 monooxygenase olcJ which hydroxylates it at the C-29 position to form decaturin F. The short-chain dehydrogenase/reductase olcF may catalyze the oxidation of decaturin F to generate the 29-hydroxyl-27-one intermediate, and subsequent hemiacetal formation probably leads to the formation of decaturin C. The dioxygenase olcK may be a peroxisomal enzyme that catalyzes the hydroxylation of decaturin C into decaturin A once decaturin C is shuttled into the peroxisome by the MFS transporter olcL. Finally the cytochrome P450 monooxygenase olcB catalyzes the oxidative rearrangement to yield 15-deoxyoxalicine B. In the absence of olcJ, decaturin E may be shunted to a pathway in which it is oxidized to a ketone, possibly by olcF, to form decaturin D, which undergoes further allylic oxidation to yield decaturin G. Moreover, in the absence of oclK or oclL, oclB can convert decaturin C into 15-deoxyoxalicine A. In Penicillium canescens, this protein is Non-reducing polyketide synthase olcA.